The following is an 87-amino-acid chain: MVNMKASMFLTFAGLVLLFVVCYASESEEKEFPKEMLSSIFAVDNDFKQEERDCAGYMRECKEKLCCSGYVCPSRWKWCVLPAPWRR.

Residues 1–24 (MVNMKASMFLTFAGLVLLFVVCYA) form the signal peptide. Positions 25 to 52 (SESEEKEFPKEMLSSIFAVDNDFKQEER) are excised as a propeptide. 3 cysteine pairs are disulfide-bonded: Cys-54/Cys-67, Cys-61/Cys-72, and Cys-66/Cys-79.

Belongs to the neurotoxin 10 (Hwtx-1) family. 51 (Hntx-8) subfamily. Hntx-8 sub-subfamily. As to expression, expressed by the venom gland.

The protein resides in the secreted. In terms of biological role, ion channel inhibitor. The sequence is that of U3-theraphotoxin-Hhn1d from Cyriopagopus hainanus (Chinese bird spider).